The chain runs to 391 residues: tRNA-specific 2-thiouridylase MnmA (391 aa).

Residues 9–16 and Met35 each bind ATP; that span reads GMSGGVDS. The tract at residues 95 to 97 is interaction with target base in tRNA; it reads NPD. The active-site Nucleophile is Cys100. A disulfide bond links Cys100 and Cys196. Gly124 contacts ATP. The tract at residues 146–148 is interaction with tRNA; sequence KDQ. Catalysis depends on Cys196, which acts as the Cysteine persulfide intermediate. Positions 308–309 are interaction with tRNA; sequence RY.

It belongs to the MnmA/TRMU family.

It localises to the cytoplasm. It catalyses the reaction S-sulfanyl-L-cysteinyl-[protein] + uridine(34) in tRNA + AH2 + ATP = 2-thiouridine(34) in tRNA + L-cysteinyl-[protein] + A + AMP + diphosphate + H(+). Functionally, catalyzes the 2-thiolation of uridine at the wobble position (U34) of tRNA, leading to the formation of s(2)U34. The protein is tRNA-specific 2-thiouridylase MnmA of Burkholderia cenocepacia (strain HI2424).